The chain runs to 561 residues: Probable xyloglucan galactosyltransferase GT20 (561 aa).

Topologically, residues 1–31 are cytoplasmic; the sequence is MVSKRKSRTSKTIEDSCIHLCSVFFRFLYYT. Residues 32-52 form a helical; Signal-anchor for type II membrane protein membrane-spanning segment; it reads LPALFLFFFLLYLCLSFTTGI. Over 53 to 561 the chain is Lumenal; sequence SYNNFHMCIF…LLKKINRSVV (509 aa). N-linked (GlcNAc...) asparagine glycosylation is found at Asn87, Asn253, Asn277, Asn418, Asn421, and Asn557.

Belongs to the glycosyltransferase 47 family. As to expression, expressed in hydathodes.

It is found in the golgi apparatus membrane. Its function is as follows. Functions in xyloglucan synthesis by adding side chains to the xylosylated glucan backbone. Involved in the galactosylation of hemicellulose xyloglucan. In Arabidopsis thaliana (Mouse-ear cress), this protein is Probable xyloglucan galactosyltransferase GT20.